Reading from the N-terminus, the 170-residue chain is Large ribosomal subunit protein uL22z (170 aa).

Belongs to the universal ribosomal protein uL22 family.

The sequence is that of Large ribosomal subunit protein uL22z from Hordeum vulgare (Barley).